Reading from the N-terminus, the 549-residue chain is Manganese transporter SMF2 (549 aa).

The disordered stretch occupies residues 1-23; sequence MTSQEYEPIQWSDESQTNNDSVN. The span at 12–22 shows a compositional bias: polar residues; sequence SDESQTNNDSV. The next 8 membrane-spanning stretches (helical) occupy residues 91-109, 130-147, 161-185, 196-214, 312-332, 350-372, 432-452, and 521-541; these read LLFSVLVSNFMAAFWQYLC, FGLNITLYILAEMAIIAT, ILFHIPLALGVILTVVDVLIVLLAY, IFEAFVSLLVVLTVVCFTV, LLISLFTVALFVNCAILIVSG, IYNLLCSTLSKGAGTVFVLALLF, ASQVVLSLLLPFVSAPLLYFT, and VLAIIVWLIISGLNFYMLLGF.

It belongs to the NRAMP family.

The protein resides in the vacuole lumen. It is found in the vesicle. Its subcellular location is the cell membrane. It carries out the reaction Mn(2+)(in) = Mn(2+)(out). In terms of biological role, high-affinity manganese transporter involved in manganese uptake from the extracellular environment. The protein is Manganese transporter SMF2 (SMF2) of Saccharomyces cerevisiae (strain ATCC 204508 / S288c) (Baker's yeast).